Here is a 500-residue protein sequence, read N- to C-terminus: Aspartyl/glutamyl-tRNA(Asn/Gln) amidotransferase subunit B (500 aa).

The protein belongs to the GatB/GatE family. GatB subfamily. Heterotrimer of A, B and C subunits.

It catalyses the reaction L-glutamyl-tRNA(Gln) + L-glutamine + ATP + H2O = L-glutaminyl-tRNA(Gln) + L-glutamate + ADP + phosphate + H(+). The catalysed reaction is L-aspartyl-tRNA(Asn) + L-glutamine + ATP + H2O = L-asparaginyl-tRNA(Asn) + L-glutamate + ADP + phosphate + 2 H(+). Functionally, allows the formation of correctly charged Asn-tRNA(Asn) or Gln-tRNA(Gln) through the transamidation of misacylated Asp-tRNA(Asn) or Glu-tRNA(Gln) in organisms which lack either or both of asparaginyl-tRNA or glutaminyl-tRNA synthetases. The reaction takes place in the presence of glutamine and ATP through an activated phospho-Asp-tRNA(Asn) or phospho-Glu-tRNA(Gln). In Brucella melitensis biotype 2 (strain ATCC 23457), this protein is Aspartyl/glutamyl-tRNA(Asn/Gln) amidotransferase subunit B.